A 109-amino-acid chain; its full sequence is Probable WRKY transcription factor 43 (109 aa).

The WRKY DNA-binding region spans 24-89 (SDADILDDGY…YEGIHNHPCE (66 aa)).

It belongs to the WRKY group II-c family.

It localises to the nucleus. In terms of biological role, transcription factor. Interacts specifically with the W box (5'-(T)TGAC[CT]-3'), a frequently occurring elicitor-responsive cis-acting element. The polypeptide is Probable WRKY transcription factor 43 (WRKY43) (Arabidopsis thaliana (Mouse-ear cress)).